The chain runs to 405 residues: Opine dehydrogenase (405 aa).

This sequence belongs to the lysopine/nopaline/octopine/opine/vitopine dehydrogenases family.

This chain is Opine dehydrogenase, found in Haliotis discus hannai (Japanese abalone).